Here is a 90-residue protein sequence, read N- to C-terminus: Small ribosomal subunit protein bS20 (90 aa).

Residues Met1–Lys15 are compositionally biased toward basic residues. The tract at residues Met1–Arg22 is disordered.

The protein belongs to the bacterial ribosomal protein bS20 family.

In terms of biological role, binds directly to 16S ribosomal RNA. This Helicobacter hepaticus (strain ATCC 51449 / 3B1) protein is Small ribosomal subunit protein bS20.